A 46-amino-acid polypeptide reads, in one-letter code: Light-harvesting protein B-800/850 beta 1 chain (46 aa).

Topologically, residues 2 to 19 are cytoplasmic; it reads AERSLSGLTEEEAIAVHD. A bacteriochlorophyll contacts are provided by H18 and H36. Residues 20 to 42 form a helical membrane-spanning segment; sequence QFKTTFSAFIILAAVAHVLVWVW. Residues 43–46 lie on the Periplasmic side of the membrane; it reads KPWF.

It belongs to the antenna complex beta subunit family. The core complex is formed by different alpha and beta chains, binding bacteriochlorophyll molecules, and arranged most probably in tetrameric structures disposed around the reaction center.

The protein resides in the cell inner membrane. In terms of biological role, antenna complexes are light-harvesting systems, which transfer the excitation energy to the reaction centers. The polypeptide is Light-harvesting protein B-800/850 beta 1 chain (B1) (Magnetospirillum molischianum (Rhodospirillum molischianum)).